Here is a 325-residue protein sequence, read N- to C-terminus: Hydroxymethylglutaryl-CoA lyase, mitochondrial (325 aa).

Residues 1–27 constitute a mitochondrion transit peptide; that stretch reads MAAMRKALPRRLVGLASLRAVSTSSMG. One can recognise a Pyruvate carboxyltransferase domain in the interval 33-300; that stretch reads VKIVEVGPRD…HTGVNLQKLL (268 aa). Arginine 41 is a substrate binding site. Aspartate 42 lines the a divalent metal cation pocket. Residue lysine 48 is modified to N6-acetyllysine; alternate. Lysine 48 is subject to N6-succinyllysine; alternate. At lysine 111 the chain carries N6-acetyllysine. N6-acetyllysine; alternate is present on residues lysine 137 and lysine 179. Lysine 137 and lysine 179 each carry N6-succinyllysine; alternate. Residues histidine 233 and histidine 235 each coordinate a divalent metal cation. Cysteine 266 is a catalytic residue. Asparagine 275 provides a ligand contact to a divalent metal cation. A Microbody targeting signal motif is present at residues 323 to 325; that stretch reads CKL. Lysine 324 carries the N6-acetyllysine modification.

Belongs to the HMG-CoA lyase family. Homodimer; disulfide-linked. Can also form homotetramers. The cofactor is a divalent metal cation. Highest expression in liver. Expressed in pancreas, kidney, intestine, testis, fibroblasts and lymphoblasts. Very low expression in brain and skeletal muscle. The relative expression of isoform 2 (at mRNA level) is highest in heart (30%), skeletal muscle (22%), and brain (14%).

The protein resides in the mitochondrion matrix. It is found in the peroxisome. The catalysed reaction is (3S)-3-hydroxy-3-methylglutaryl-CoA = acetoacetate + acetyl-CoA. It participates in metabolic intermediate metabolism; (S)-3-hydroxy-3-methylglutaryl-CoA degradation; acetoacetate from (S)-3-hydroxy-3-methylglutaryl-CoA: step 1/1. With respect to regulation, stimulated by reducing agents such as dithiothreitol (DTT). Mitochondrial 3-hydroxy-3-methylglutaryl-CoA lyase that catalyzes a cation-dependent cleavage of (S)-3-hydroxy-3-methylglutaryl-CoA into acetyl-CoA and acetoacetate, a key step in ketogenesis. Terminal step in leucine catabolism. Ketone bodies (beta-hydroxybutyrate, acetoacetate and acetone) are essential as an alternative source of energy to glucose, as lipid precursors and as regulators of metabolism. The sequence is that of Hydroxymethylglutaryl-CoA lyase, mitochondrial (HMGCL) from Homo sapiens (Human).